A 33-amino-acid polypeptide reads, in one-letter code: HAGTYTSDVSSYLQDQAAKEFVSWLKTGRGRRD.

Belongs to the glucagon family.

It localises to the secreted. Functionally, promotes hydrolysis of glycogen and lipids, and raises the blood sugar level. The protein is Glucagon-2 (gcg2) of Oreochromis niloticus (Nile tilapia).